Consider the following 348-residue polypeptide: Xaa-Pro dipeptidase (348 aa).

Co(2+) contacts are provided by Asp-209, Asp-220, His-284, Glu-313, and Glu-327.

This sequence belongs to the peptidase M24B family. Archaeal-type prolidase subfamily. Homodimer. The cofactor is Co(2+). Requires Mn(2+) as cofactor.

It localises to the cytoplasm. The enzyme catalyses Xaa-L-Pro dipeptide + H2O = an L-alpha-amino acid + L-proline. In terms of biological role, splits dipeptides with a prolyl in the C-terminal position and a nonpolar amino acid at the N-terminal position. The sequence is that of Xaa-Pro dipeptidase (pepQ) from Pyrococcus furiosus (strain ATCC 43587 / DSM 3638 / JCM 8422 / Vc1).